Reading from the N-terminus, the 597-residue chain is Sialic acid-binding Ig-like lectin 12 (597 aa).

Positions 1-20 are cleaved as a signal peptide; it reads MLLLLLLLLLPPLLCGRVGA. Ig-like V-type domains lie at 21 to 144 and 145 to 271; these read KEQK…VNVT and ASQD…VHVT. At 21 to 483 the chain is on the extracellular side; the sequence is KEQKDYLLTM…RPISGVTLGA (463 aa). The cysteines at positions 46 and 106 are disulfide-linked. 4 N-linked (GlcNAc...) asparagine glycosylation sites follow: Asn-142, Asn-181, Asn-232, and Asn-292. 3 cysteine pairs are disulfide-bonded: Cys-168–Cys-301, Cys-173–Cys-233, and Cys-295–Cys-344. The Ig-like C2-type 1 domain maps to 277–360; the sequence is PTFSIPGTLE…AGVTTTRAVR (84 aa). N-linked (GlcNAc...) asparagine glycans are attached at residues Asn-362, Asn-369, and Asn-387. One can recognise an Ig-like C2-type 2 domain in the interval 367–464; it reads PQNLTMTVFQ…GSQHISLSLS (98 aa). A disulfide bridge links Cys-403 with Cys-448. A helical membrane pass occupies residues 484 to 504; it reads VGGAGATALVFLSFCIIFVVV. At 505–597 the chain is on the cytoplasmic side; it reads RSCRKKSARP…YEYSEINILK (93 aa). The disordered stretch occupies residues 514–558; the sequence is PAVGVGDTGMEDTNAVRGSASQGPLIESPADDSPPHHAPPALATP. The ITIM motif motif lies at 565 to 570; that stretch reads IQYASL. 2 positions are modified to phosphotyrosine: Tyr-567 and Tyr-590. Positions 588–593 match the SLAM-like motif motif; that stretch reads YEYSEI.

This sequence belongs to the immunoglobulin superfamily. SIGLEC (sialic acid binding Ig-like lectin) family.

It is found in the membrane. Its function is as follows. Putative adhesion molecule that mediates sialic-acid dependent binding to cells. The sialic acid recognition site may be masked by cis interactions with sialic acids on the same cell surface. This is Sialic acid-binding Ig-like lectin 12 (SIGLEC12) from Pan troglodytes (Chimpanzee).